A 328-amino-acid chain; its full sequence is MSKPARRVAVTGAAGQIAYSLLFRIARGDLLGDDQPVILQLLELPHALDALRGVVMELEDCAFPLLQSVEISDDPRVAFRDADYAMLVGSRPRGKGMERRDLLAANAAIFRSQGEALNEVANRQVKVLVVGNPANTNAWVARHYAPDLPADAITAMIRLDHNRAVSKLAARCGVTVDAVSRMAVWGNHSPTMFPDYRHALIDQQPAPMRVGDERWYLDTFIPEVARRGTAIIEARGASSAASAANAAIDQMRDWIRGSGGRWVSMSIVSGGEYGIPRGLMFGMPTICSEGRYRVVPDLEIDALARARIDASVAELVDEMQAVRAILAL.

Position 12-18 (12-18 (GAAGQIA)) interacts with NAD(+). Substrate-binding residues include arginine 93 and arginine 99. NAD(+)-binding positions include asparagine 106, glutamine 113, and 130 to 132 (VGN). Substrate-binding residues include asparagine 132 and arginine 163. The Proton acceptor role is filled by histidine 188.

Belongs to the LDH/MDH superfamily. MDH type 2 family.

It catalyses the reaction (S)-malate + NAD(+) = oxaloacetate + NADH + H(+). Its function is as follows. Catalyzes the reversible oxidation of malate to oxaloacetate. The protein is Malate dehydrogenase 1 of Burkholderia vietnamiensis (strain G4 / LMG 22486) (Burkholderia cepacia (strain R1808)).